Here is a 242-residue protein sequence, read N- to C-terminus: Peroxisomal membrane protein 11-3 (242 aa).

Positions 1 to 22 (MAAAAAAAGSSDSRKPAAHPPP) are disordered. Over 1–102 (MAAAAAAAGS…LRAHPHPPPA (102 aa)) the chain is Cytoplasmic. The chain crosses the membrane as a helical span at residues 103–123 (VALLAYGGEGVYYFLEQFVWL). Over 124 to 214 (AKAGLLPAHL…MALGDVTDGK (91 aa)) the chain is Lumenal. A helical transmembrane segment spans residues 215 to 235 (GLLGSSTLMASAGLLSALISA). Over 236–242 (HKNWNSC) the chain is Cytoplasmic.

Belongs to the peroxin-11 family. Expressed in seedlings, roots, leaf sheaths, spikelets and endosperm.

Its subcellular location is the peroxisome membrane. Involved in peroxisomal proliferation. This Oryza sativa subsp. japonica (Rice) protein is Peroxisomal membrane protein 11-3 (PEX11-3).